The sequence spans 430 residues: GTPase Obg (430 aa).

The Obg domain maps to 1-158 (MFIDTAKVFV…LNIVLELKLL (158 aa)). An OBG-type G domain is found at 159-331 (ADVGLLGFPN…VMKEAARILK (173 aa)). GTP contacts are provided by residues 165–172 (GFPNVGKS), 190–194 (FTTLK), 212–215 (DIPG), 282–285 (NKSD), and 312–314 (SAA). Residues Ser172 and Thr192 each contribute to the Mg(2+) site. Residues 345–430 (MYIPEEKRFT…LNDFEFEYIL (86 aa)) enclose the OCT domain.

Belongs to the TRAFAC class OBG-HflX-like GTPase superfamily. OBG GTPase family. As to quaternary structure, monomer. Requires Mg(2+) as cofactor.

The protein resides in the cytoplasm. In terms of biological role, an essential GTPase which binds GTP, GDP and possibly (p)ppGpp with moderate affinity, with high nucleotide exchange rates and a fairly low GTP hydrolysis rate. Plays a role in control of the cell cycle, stress response, ribosome biogenesis and in those bacteria that undergo differentiation, in morphogenesis control. The protein is GTPase Obg of Clostridium beijerinckii (strain ATCC 51743 / NCIMB 8052) (Clostridium acetobutylicum).